The chain runs to 200 residues: Beta-1,6-glucan synthesis-associated protein KEG1 (200 aa).

Residues methionine 1–glutamine 15 are Lumenal-facing. Residues leucine 16–valine 36 traverse the membrane as a helical segment. The Cytoplasmic portion of the chain corresponds to glycine 37–glycine 44. Residues isoleucine 45–leucine 65 traverse the membrane as a helical segment. The Lumenal segment spans residues arginine 66 to aspartate 82. The helical transmembrane segment at leucine 83–isoleucine 103 threads the bilayer. The Cytoplasmic portion of the chain corresponds to leucine 104–threonine 145. The helical transmembrane segment at phenylalanine 146–valine 166 threads the bilayer. Residues lysine 167–proline 173 lie on the Lumenal side of the membrane. The chain crosses the membrane as a helical span at residues threonine 174–tyrosine 194. The Cytoplasmic segment spans residues lysine 195–lysine 200.

In terms of assembly, interacts with KRE6.

Its subcellular location is the endoplasmic reticulum membrane. In terms of biological role, involved in the biosynthesis of (1-&gt;6)-beta-D-glucan polymers of the cell wall. Required for viability. Involved in maintaining chromosome stability. In Saccharomyces cerevisiae (strain ATCC 204508 / S288c) (Baker's yeast), this protein is Beta-1,6-glucan synthesis-associated protein KEG1 (KEG1).